The sequence spans 309 residues: HPr kinase/phosphorylase (309 aa).

Residues histidine 138 and lysine 159 contribute to the active site. Glycine 153–serine 160 is an ATP binding site. Serine 160 lines the Mg(2+) pocket. The active-site Proton acceptor; for phosphorylation activity. Proton donor; for dephosphorylation activity is aspartate 177. Positions leucine 201–asparagine 210 are important for the catalytic mechanism of both phosphorylation and dephosphorylation. Residue glutamate 202 participates in Mg(2+) binding. The active site involves arginine 243. Positions proline 264–arginine 269 are important for the catalytic mechanism of dephosphorylation.

Belongs to the HPrK/P family. As to quaternary structure, homohexamer. Mg(2+) is required as a cofactor.

It carries out the reaction [HPr protein]-L-serine + ATP = [HPr protein]-O-phospho-L-serine + ADP + H(+). The catalysed reaction is [HPr protein]-O-phospho-L-serine + phosphate + H(+) = [HPr protein]-L-serine + diphosphate. In terms of biological role, catalyzes the ATP- as well as the pyrophosphate-dependent phosphorylation of a specific serine residue in HPr, a phosphocarrier protein of the phosphoenolpyruvate-dependent sugar phosphotransferase system (PTS). HprK/P also catalyzes the pyrophosphate-producing, inorganic phosphate-dependent dephosphorylation (phosphorolysis) of seryl-phosphorylated HPr (P-Ser-HPr). The two antagonistic activities of HprK/P are regulated by several intracellular metabolites, which change their concentration in response to the absence or presence of rapidly metabolisable carbon sources (glucose, fructose, etc.) in the growth medium. Also phosphorylates/dephosphorylates the HPr-like catabolite repression protein crh on a specific serine residue. Therefore, by controlling the phosphorylation state of HPr and crh, HPrK/P is a sensor enzyme that plays a major role in the regulation of carbon metabolism and sugar transport: it mediates carbon catabolite repression (CCR), and regulates PTS-catalyzed carbohydrate uptake and inducer exclusion. The sequence is that of HPr kinase/phosphorylase from Bacillus cytotoxicus (strain DSM 22905 / CIP 110041 / 391-98 / NVH 391-98).